The following is a 413-amino-acid chain: Phosphatidylcholine:ceramide cholinephosphotransferase 1 (413 aa).

In terms of domain architecture, SAM spans 7–70; it reads WSPKKVADWL…LDMIETLKME (64 aa). Serine 8 carries the post-translational modification Phosphoserine. Transmembrane regions (helical) follow at residues 136-156, 184-204, 215-235, 276-296, and 304-324; these read FLAF…ISVV, FSIC…QWLL, FFCI…VTTL, MCGD…YLFI, and LWWY…CILL. Histidine 285 is a catalytic residue. Over 325 to 413 the chain is Cytoplasmic; it reads AHDHYTVDVV…VKYSRLVNDT (89 aa). Residues histidine 328 and aspartate 332 contribute to the active site.

It belongs to the sphingomyelin synthase family. As to expression, brain, heart, kidney, liver, muscle and stomach.

The protein resides in the golgi apparatus membrane. It catalyses the reaction an N-acylsphing-4-enine + a 1,2-diacyl-sn-glycero-3-phosphocholine = a sphingomyelin + a 1,2-diacyl-sn-glycerol. It carries out the reaction an N-acylsphinganine + a 1,2-diacyl-sn-glycero-3-phosphocholine = an N-acylsphinganine-1-phosphocholine + a 1,2-diacyl-sn-glycerol. The catalysed reaction is an N-acyl-(4R)-4-hydroxysphinganine + a 1,2-diacyl-sn-glycero-3-phosphocholine = an N-acyl-(4R)-4-hydroxysphinganine-phosphocholine + a 1,2-diacyl-sn-glycerol. The enzyme catalyses 1-(9Z-octadecenoyl)-2-acyl-sn-3-glycerol + a sphingomyelin = a 1-(9Z-octadecenoyl)-2-acyl-sn-glycero-3-phosphocholine + an N-acylsphing-4-enine. It catalyses the reaction N-hexadecanoylsphinganine + a 1,2-diacyl-sn-glycero-3-phosphocholine = N-hexadecanoyl-sphinganine-1-phosphocholine + a 1,2-diacyl-sn-glycerol. It carries out the reaction N-hexadecanoyl-(4R)-hydroxysphinganine + a 1,2-diacyl-sn-glycero-3-phosphocholine = N-hexadecanoyl-(4R)-hydroxysphinganine-phosphocholine + a 1,2-diacyl-sn-glycerol. The catalysed reaction is an N-acylsphing-4-enine + a 1,2-diacyl-sn-glycero-3-phosphoethanolamine = an N-acylsphing-4-enine 1-phosphoethanolamine + a 1,2-diacyl-sn-glycerol. It functions in the pathway sphingolipid metabolism. With respect to regulation, inhibited by bacterial PC-phospholipase C inhibitor D609. Functionally, major sphingomyelin synthase at the Golgi apparatus. Catalyzes the reversible transfer of phosphocholine moiety in sphingomyelin biosynthesis: in the forward reaction transfers phosphocholine head group of phosphatidylcholine (PC) on to ceramide (CER) to form ceramide phosphocholine (sphingomyelin, SM) and diacylglycerol (DAG) as by-product, and in the reverse reaction transfers phosphocholine from SM to DAG to form PC and CER. The direction of the reaction depends on the levels of CER and DAG in Golgi membranes. Converts the newly synthesized CER, that is transported from the endoplasmic reticulum to the trans-Golgi by the Cer transport protein (CERT), to SM. Can form a heteromeric complex with glucosylceramide synthase (GCS) increasing SMS activity and reducing glucosylceramide synthesis, a critical mechanism that controls the metabolic fate of CER in the Golgi. Does not use free phosphorylcholine or CDP-choline as donor. Can also transfer phosphoethanolamine head group of phosphatidylethanolamine (PE) on to CER to form ceramide phosphoethanolamine (CPE). Regulates receptor-mediated signal transduction via mitogenic DAG and proapoptotic CER, as well as via SM, a structural component of membrane rafts that serve as platforms for signal transduction and protein sorting. Plays a role in secretory transport via regulation of DAG pool at the Golgi apparatus and its downstream effects on PRKD1. The chain is Phosphatidylcholine:ceramide cholinephosphotransferase 1 (SGMS1) from Homo sapiens (Human).